The sequence spans 509 residues: Phosphoprotein (509 aa).

3 disordered regions span residues 33–84, 131–236, and 256–281; these read LESW…LGFR, VQAN…DGNS, and PESR…SAKT. Positions 44–65 are enriched in polar residues; sequence GRATPNPDTSEGDHQNINQSCS. Over residues 146-157 the composition is skewed to acidic residues; sequence DGSDDSDVDSGP. S151 carries the post-translational modification Phosphoserine. A compositionally biased stretch (basic and acidic residues) spans 178–187; it reads RSTDVEKLEG. Positions 221 to 236 are enriched in polar residues; that stretch reads SRPSAQSIKKGTDGNS. The segment at 303-376 is multimerization; that stretch reads SEFEYEDDLF…LSSIMIAIPG (74 aa). The interaction with the nucleocapsid (N-RNA) stretch occupies residues 459–509; it reads SSRSVIRSIIKSSKLNIDHKDYLLDLLNDVKGSKDLKEFHKMLTAILAKQP.

The protein belongs to the morbillivirus P protein family. In terms of assembly, homotetramer. Interacts (via multimerization domain) with polymerase L; this interaction forms the polymerase L-P complex. Interacts (via N-terminus) with N0 (via Ncore); this interaction allows P to chaperon N0 to avoid N polymerization before encapsidation. Interacts (via C-terminus) with N-RNA template; this interaction positions the polymerase on the template for both transcription and replication. Interacts with host ISG15; this interaction disrupts the activity of the N0-P complex. In terms of processing, phosphorylation on serines by host CK2 is necessary for the formation of viral factories.

Functionally, essential cofactor of the RNA polymerase L that plays a central role in the transcription and replication by forming the polymerase complex with RNA polymerase L and recruiting L to the genomic N-RNA template for RNA synthesis. Also plays a central role in the encapsidation of nascent RNA chains by forming the encapsidation complex with the nucleocapsid protein N (N-P complex). Acts as a chaperone for newly synthesized free N protein, so-called N0, allowing encapsidation of nascent RNA chains during replication. The nucleoprotein protein N prevents excessive phosphorylation of P, which leads to down-regulation of viral transcription/ replication. Participates, together with N, in the formation of viral factories (viroplasms), which are large inclusions in the host cytoplasm where replication takes place. In Capra hircus (Goat), this protein is Phosphoprotein (P/V).